We begin with the raw amino-acid sequence, 157 residues long: Probable succinate transporter subunit YjjB (157 aa).

A run of 4 helical transmembrane segments spans residues 8–28, 50–70, 87–107, and 129–149; these read LALA…AMVF, MILM…SMLV, VFTV…TAMI, and FLTA…PGLW.

The protein belongs to the ThrE exporter (TC 2.A.79) family. In terms of assembly, the transporter is composed of YjjB and YjjP.

It localises to the cell inner membrane. In terms of biological role, involved in succinate export with YjjP. Both proteins are required for export. The polypeptide is Probable succinate transporter subunit YjjB (Escherichia coli O1:K1 / APEC).